The chain runs to 588 residues: Hyaluronan synthase 1 (588 aa).

Topologically, residues 1–28 are cytoplasmic; sequence MKEKAAETMEIPEGIPKDLEPKHPTLWR. Residues 29-49 traverse the membrane as a helical segment; sequence IIYYSFGVVLLATITAAYVAE. Topologically, residues 50-61 are extracellular; the sequence is FQVLKHEAILFS. Residues 62-82 traverse the membrane as a helical segment; it reads LGLYGLAMLLHLMMQSLFAFL. Residues 83–411 are Cytoplasmic-facing; the sequence is EIRRVNKSEL…IWMTYESVVS (329 aa). Residues 412-432 traverse the membrane as a helical segment; that stretch reads FIFPFFITATVIRLIYAGTIW. Position 433 (Asn-433) is a topological domain, extracellular. Residues 434–454 traverse the membrane as a helical segment; the sequence is VVWLLLCIQIMSLFKSIYACW. Topologically, residues 455-456 are cytoplasmic; that stretch reads LR. Residues 457-477 form a helical membrane-spanning segment; it reads GNFIMLLMSLYSMLYMTGLLP. The Extracellular segment spans residues 478–505; sequence SKYFALLTLNKTGWGTSGRKKIVGNYMP. Residues 506–526 form a helical membrane-spanning segment; the sequence is ILPLSIWAAVLCGGVGYSIYM. Residues 527–543 lie on the Cytoplasmic side of the membrane; the sequence is DCQNDWSTPEKQKEMYH. The chain crosses the membrane as a helical span at residues 544 to 564; that stretch reads LLYGCVGYVMYWVIMAVMYWV. Residues 565–588 are Extracellular-facing; it reads WVKRCCRKRSQTVTLVHDIPDMCV.

The protein belongs to the NodC/HAS family. The cofactor is Mg(2+). In terms of tissue distribution, expression moves as a gradient through the embryo. The mRNA is first expressed in the animal region of the blastula, and by early gastrula is found everywhere except in the outer layer of the dorsal blastopore lip. By mid-gastrula, protein is present in the inner ectodermal layer and the endoderm, then disappears from dorsal ectoderm as the neural plate is induced and later decays in a dorsoventral direction. Last expressed in ventral regions of the gut at the tailbud stage (at protein level).

The protein resides in the membrane. It catalyses the reaction [hyaluronan](n) + UDP-N-acetyl-alpha-D-glucosamine = N-acetyl-beta-D-glucosaminyl-(1-&gt;4)-[hyaluronan](n) + UDP + H(+). It carries out the reaction N-acetyl-beta-D-glucosaminyl-(1-&gt;4)-[hyaluronan](n) + UDP-alpha-D-glucuronate = [hyaluronan](n+1) + UDP + H(+). The protein operates within glycan biosynthesis; hyaluronan biosynthesis. Functionally, catalyzes the addition of GlcNAc or GlcUA monosaccharides to the nascent hyaluronan polymer. Therefore, it is essential to hyaluronan synthesis a major component of most extracellular matrices that has a structural role in tissues architectures and regulates cell adhesion, migration and differentiation. Also able to catalyze the synthesis of chito-oligosaccharide depending on the substrate. This is Hyaluronan synthase 1 (has1) from Xenopus laevis (African clawed frog).